Consider the following 594-residue polypeptide: Amino-acid permease 1 (594 aa).

Transmembrane regions (helical) follow at residues Gln-75–Leu-95, Gly-101–Leu-121, Ile-146–Ile-166, Leu-181–Gly-201, Phe-210–Ile-230, Val-297–Pro-317, Leu-323–His-343, Ile-344–Ala-364, Pro-390–Pro-410, Phe-416–Ile-436, Tyr-468–Val-488, and Phe-498–Phe-518. Residues Thr-550–Gln-587 are disordered.

Belongs to the amino acid-polyamine-organocation (APC) superfamily.

The protein resides in the membrane. The polypeptide is Amino-acid permease 1 (aap1) (Schizosaccharomyces pombe (strain 972 / ATCC 24843) (Fission yeast)).